Consider the following 502-residue polypeptide: Biotin biosynthesis bifunctional protein BioHC (502 aa).

The segment at 1–224 (MTRPVLVLVH…IHVIAGSAHA (224 aa)) is carboxylesterase. A substrate-binding site is contributed by Trp12. Ser72 acts as the Nucleophile in catalysis. 134 to 138 (FTGLL) contributes to the substrate binding site. Active-site residues include Asp195 and His223. Residue His223 coordinates substrate. Residues 225 to 502 (VHWSQPQQLI…EVYYLVLCKP (278 aa)) are malonyl-ACP O-methyltransferase.

The protein in the N-terminal section; belongs to the AB hydrolase superfamily. Carboxylesterase BioH family. In the C-terminal section; belongs to the methyltransferase superfamily.

The enzyme catalyses a carboxylic ester + H2O = an alcohol + a carboxylate + H(+). The catalysed reaction is malonyl-[ACP] + S-adenosyl-L-methionine = malonyl-[ACP] methyl ester + S-adenosyl-L-homocysteine. It participates in cofactor biosynthesis; biotin biosynthesis. Its function is as follows. Converts the free carboxyl group of a malonyl-thioester to its methyl ester by transfer of a methyl group from S-adenosyl-L-methionine (SAM). It allows to synthesize pimeloyl-ACP via the fatty acid synthetic pathway. In terms of biological role, the physiological role of BioH is to remove the methyl group introduced by BioC when the pimeloyl moiety is complete. It allows to synthesize pimeloyl-ACP via the fatty acid synthetic pathway through the hydrolysis of the ester bonds of pimeloyl-ACP esters. The polypeptide is Biotin biosynthesis bifunctional protein BioHC (bioC) (Cellvibrio japonicus (strain Ueda107) (Pseudomonas fluorescens subsp. cellulosa)).